The chain runs to 295 residues: MSSPAPDALLGPADIRELAAALGVRPTKQRGQNFVIDANTVRRIVRTAGVRPDDVVVEVGPGLGSLTLALLEAADRVIAVEIDDVLAGALPATIAARMPERAERFALVHSDAMHVRELPGPPPTALVANLPYNVAVPVLLHMLDTFPSIERTLVMVQAEVADRLAADPGSRVYGVPSVKANWHAEVKRAGSIGRNVFWPAPNVDSGLVSLVRRTEPIKTTASKTEVFAVVDAAFAQRRKTLRAALAGWAGSAAAAEAALVAAGVSPQARGESLTVEEFARIAENRGADHADDANN.

S-adenosyl-L-methionine contacts are provided by asparagine 33, valine 35, glycine 60, glutamate 81, aspartate 111, and asparagine 129.

This sequence belongs to the class I-like SAM-binding methyltransferase superfamily. rRNA adenine N(6)-methyltransferase family. RsmA subfamily.

It localises to the cytoplasm. The enzyme catalyses adenosine(1518)/adenosine(1519) in 16S rRNA + 4 S-adenosyl-L-methionine = N(6)-dimethyladenosine(1518)/N(6)-dimethyladenosine(1519) in 16S rRNA + 4 S-adenosyl-L-homocysteine + 4 H(+). Specifically dimethylates two adjacent adenosines (A1518 and A1519) in the loop of a conserved hairpin near the 3'-end of 16S rRNA in the 30S particle. May play a critical role in biogenesis of 30S subunits. The polypeptide is Ribosomal RNA small subunit methyltransferase A (Streptomyces avermitilis (strain ATCC 31267 / DSM 46492 / JCM 5070 / NBRC 14893 / NCIMB 12804 / NRRL 8165 / MA-4680)).